The sequence spans 233 residues: Cysteine-rich venom protein LIO1 (233 aa).

A signal peptide spans methionine 1 to glycine 18. The SCP domain maps to valine 37–tyrosine 165. Intrachain disulfides connect cysteine 74–cysteine 152, cysteine 91–cysteine 166, cysteine 147–cysteine 163, cysteine 185–cysteine 192, cysteine 188–cysteine 197, cysteine 210–cysteine 228, and cysteine 219–cysteine 232. In terms of domain architecture, ShKT spans cysteine 201 to phenylalanine 233.

Belongs to the CRISP family. As to expression, expressed by the venom gland.

The protein localises to the secreted. Its function is as follows. Blocks contraction of smooth muscle elicited by high potassium-induced depolarization, but does not block caffeine-stimulated contraction. May target voltage-gated calcium channels on smooth muscle. The sequence is that of Cysteine-rich venom protein LIO1 from Erythrolamprus poecilogyrus (Water snake).